The sequence spans 178 residues: ATP synthase subunit delta (178 aa).

It belongs to the ATPase delta chain family. In terms of assembly, F-type ATPases have 2 components, F(1) - the catalytic core - and F(0) - the membrane proton channel. F(1) has five subunits: alpha(3), beta(3), gamma(1), delta(1), epsilon(1). F(0) has three main subunits: a(1), b(2) and c(10-14). The alpha and beta chains form an alternating ring which encloses part of the gamma chain. F(1) is attached to F(0) by a central stalk formed by the gamma and epsilon chains, while a peripheral stalk is formed by the delta and b chains.

It localises to the cell inner membrane. F(1)F(0) ATP synthase produces ATP from ADP in the presence of a proton or sodium gradient. F-type ATPases consist of two structural domains, F(1) containing the extramembraneous catalytic core and F(0) containing the membrane proton channel, linked together by a central stalk and a peripheral stalk. During catalysis, ATP synthesis in the catalytic domain of F(1) is coupled via a rotary mechanism of the central stalk subunits to proton translocation. Functionally, this protein is part of the stalk that links CF(0) to CF(1). It either transmits conformational changes from CF(0) to CF(1) or is implicated in proton conduction. The polypeptide is ATP synthase subunit delta (Pseudomonas aeruginosa (strain UCBPP-PA14)).